The chain runs to 844 residues: Aminopeptidase N (844 aa).

Residues Glu-120 and Gly-253–Asn-257 contribute to the substrate site. Residue His-289 coordinates Zn(2+). Glu-290 functions as the Proton acceptor in the catalytic mechanism. 2 residues coordinate Zn(2+): His-293 and Glu-312.

This sequence belongs to the peptidase M1 family. Monomer. The cofactor is Zn(2+).

It localises to the cytoplasm. The catalysed reaction is Release of an N-terminal amino acid, Xaa-|-Yaa- from a peptide, amide or arylamide. Xaa is preferably Ala, but may be most amino acids including Pro (slow action). When a terminal hydrophobic residue is followed by a prolyl residue, the two may be released as an intact Xaa-Pro dipeptide.. Aminopeptidase N is involved in the degradation of intracellular peptides generated by protein breakdown during normal growth as well as in response to nutrient starvation. The chain is Aminopeptidase N (pepN) from Lactobacillus helveticus (Lactobacillus suntoryeus).